The primary structure comprises 563 residues: (R)-mandelonitrile lyase 1 (563 aa).

Residues 1–27 (MEKSTMSAILLVLHLFVLLLQYSEVHS) form the signal peptide. FAD-binding positions include 63 to 64 (TS), 82 to 83 (ER), Val129, Thr133, and 137 to 140 (NAGV). 2 N-linked (GlcNAc...) asparagine glycosylation sites follow: Asn145 and Asn162. FAD is bound at residue Val244. Cys355 contacts substrate. Residue Asn379 is glycosylated (N-linked (GlcNAc...) asparagine). Residues Cys426 and Cys477 are joined by a disulfide bond. Tyr484 is a binding site for substrate. Residues 485 to 486 (WH) and Gly514 contribute to the FAD site. His486 serves as the catalytic Proton donor. Residue His524 is the Proton acceptor of the active site. An FAD-binding site is contributed by 525–526 (PQ).

It belongs to the GMC oxidoreductase family. In terms of assembly, monomer. FAD serves as cofactor. Glycosylated. In terms of tissue distribution, seeds. Localized within cotyledonary parenchyma cells.

Its subcellular location is the vacuole. It is found in the aleurone grain. The catalysed reaction is (R)-mandelonitrile = benzaldehyde + hydrogen cyanide. In terms of biological role, involved in cyanogenesis, the release of HCN from injured tissues. Catalyzes the stereospecific addition of HCN to a variety of aldehydes in vitro. It is a major seed constituent, and could have the additional role of a storage form for reduced nitrogen. This is (R)-mandelonitrile lyase 1 (MDL1) from Prunus serotina (Black cherry).